The primary structure comprises 574 residues: Kelch-like protein 35 (574 aa).

The 71-residue stretch at 40 to 110 folds into the BTB domain; the sequence is TDVVLRAGGR…VYGAGVRLRA (71 aa). Positions 146-248 constitute a BACK domain; it reads SLALRRVAAA…APAYFLEKVE (103 aa). Kelch repeat units follow at residues 292-341, 343-385, 386-432, 434-480, 481-522, and 524-570; these read VIVV…ALRN, IYVS…ALQG, QLFA…PCAG, LYVI…SLED, TIYV…VCDG, and VHIL…TIVQ.

This Mus musculus (Mouse) protein is Kelch-like protein 35 (Klhl35).